Consider the following 210-residue polypeptide: BAG family molecular chaperone regulator 2 (210 aa).

Residue A2 is modified to N-acetylalanine. A phosphoserine mark is found at S20, S31, and S73. Residues 20 to 60 (SMADRSSRLLESLDQLELRVEALRDAATAVEQEKEILLEMI) are a coiled coil. A BAG domain is found at 109–189 (SLKHATRIID…NIDNSDKAIK (81 aa)).

In terms of assembly, binds to the ATPase domain of HSP/HSC70 chaperones. May interact with NWD1. Interacts with HSPA1A (via NBD), HSPA1B (via NBD) and HSPA8. May interact with DNJC9; the interaction seems to be histone-dependent.

In terms of biological role, co-chaperone for HSP70 and HSC70 chaperone proteins. Acts as a nucleotide-exchange factor (NEF) promoting the release of ADP from the HSP70 and HSC70 proteins thereby triggering client/substrate protein release. The protein is BAG family molecular chaperone regulator 2 (Bag2) of Mus musculus (Mouse).